Consider the following 510-residue polypeptide: 2,3-bisphosphoglycerate-independent phosphoglycerate mutase (510 aa).

Mn(2+) contacts are provided by Asp-14 and Ser-64. Ser-64 serves as the catalytic Phosphoserine intermediate. Residues His-125, 155 to 156, Arg-187, Arg-193, 259 to 262, and Lys-332 contribute to the substrate site; these read RD and RADR. Asp-399, His-403, Asp-440, His-441, and His-459 together coordinate Mn(2+).

Belongs to the BPG-independent phosphoglycerate mutase family. Monomer. Mn(2+) serves as cofactor.

It carries out the reaction (2R)-2-phosphoglycerate = (2R)-3-phosphoglycerate. The protein operates within carbohydrate degradation; glycolysis; pyruvate from D-glyceraldehyde 3-phosphate: step 3/5. In terms of biological role, catalyzes the interconversion of 2-phosphoglycerate and 3-phosphoglycerate. The protein is 2,3-bisphosphoglycerate-independent phosphoglycerate mutase of Pseudomonas syringae pv. syringae (strain B728a).